The chain runs to 479 residues: MPDDEEKLQLLADVERLKKILRQKDEMLEEMEDDLKNQGKPCSSKLSLEERAQELSEQLRDLHVEMDGKNATILDRDALIDSLRSEIDKLEKINKEFANGSVIPEHDDSNSFGESEMLRISEDCQKYKETATALYERNAELEKEAVNLKDEIESMMDHIRDLKNHMETRDEEIARLEGELFDERNSHEGKLAARGNSMFSEVIDAERKVEEDLKVLHGENRALKGMVKRLRMEVEEVEERLRSSTKRFNVTRMTTSDIDVKEMRRLRDRVCHLETERVHLWERMFIKMRSIPKREVGALITGYFKSFELSIASVKGGFDGLMKDNEKYVTIIRGLQQEVENLKADIVQLQFDNKCAHRKAAPVVNKDFEHPLLAAPLKTLNNGRPSFFIKPKNVEPMPQLGHSLSSIAVTPQKPAAKFTTRSSIKDDTSEWAERRMKAQAEKKLATPTPRYNYIKLSEPVPKFKPAVLQMPSTSETKEN.

Coiled coils occupy residues 4 to 180 (DEEK…EGEL), 210 to 250 (EEDL…RFNV), and 321 to 357 (LMKDNEKYVTIIRGLQQEVENLKADIVQLQFDNKCAH).

In terms of assembly, interacts with Zwilch homolog zwl-1, a component of the RZZ complex. Interacts with mdf-1 and mdf-2.

The protein resides in the chromosome. Its subcellular location is the centromere. The protein localises to the kinetochore. It localises to the cytoplasm. It is found in the cytoskeleton. The protein resides in the spindle pole. Its function is as follows. Transient kinetochore component required for chromosome and spindle pole alignment and chromosome segregation during mitosis. Functions downstream of the RZZ complex to mediate kinetochore-microtubule attachments and nuclear envelope breakdown during cell division. Required for kinetochore assembly and localizes the checkpoint proteins mdf-1 and mdf-2, dynein and dynactin to unattached kinetochores. Dynein is believed to control the initial lateral interaction between the kinetochore and spindle microtubules and to facilitate the subsequent formation of end-on kinetochore-microtubule attachments mediated by the NDC80 complex. Required for embryonic development. The protein is Spindly-like protein spdl-1 of Caenorhabditis elegans.